The sequence spans 270 residues: 5-amino-6-(5-phospho-D-ribitylamino)uracil phosphatase YitU (270 aa).

D11 (nucleophile) is an active-site residue. Mg(2+) is bound at residue D11. Phosphate is bound at residue L12. D13 contributes to the Mg(2+) binding site. Phosphate contacts are provided by residues 45-46 and K197; that span reads TG. D220 is a binding site for Mg(2+). Position 223 (N223) interacts with phosphate.

It belongs to the HAD-like hydrolase superfamily. Cof family. The cofactor is Mg(2+).

The enzyme catalyses 5-amino-6-(5-phospho-D-ribitylamino)uracil + H2O = 5-amino-6-(D-ribitylamino)uracil + phosphate. The protein operates within cofactor biosynthesis; riboflavin biosynthesis; 5-amino-6-(D-ribitylamino)uracil from GTP: step 4/4. Functionally, catalyzes the dephosphorylation of the riboflavin precursor 5-amino-6-(5-phospho-D-ribitylamino)uracil and of flavin mononucleotide (FMN) in vitro. This Bacillus subtilis (strain 168) protein is 5-amino-6-(5-phospho-D-ribitylamino)uracil phosphatase YitU (yitU).